Consider the following 424-residue polypeptide: Hemagglutinin-esterase (424 aa).

An N-terminal signal peptide occupies residues 1 to 16 (MFLLPRFVLVSCIIGS). Residues 7 to 127 (FVLVSCIIGS…SNDIWMQNKG (121 aa)) form an esterase domain 1 region. Residues 17-392 (LGFDNPPTNV…PICVYDPLPI (376 aa)) lie on the Virion surface side of the membrane. Serine 40 (nucleophile) is an active-site residue. The cysteines at positions 44 and 65 are disulfide-linked. N-linked (GlcNAc...) asparagine; by host glycosylation is found at asparagine 54, asparagine 89, asparagine 153, asparagine 236, and asparagine 301. 3 disulfide bridges follow: cysteine 113-cysteine 162, cysteine 197-cysteine 276, and cysteine 205-cysteine 249. Positions 128-266 (LFYTQVYKNM…GNYLAISNEL (139 aa)) are receptor binding. Positions 267–379 (LLTVPTKAIC…RCPTAADINT (113 aa)) are esterase domain 2. An intrachain disulfide couples cysteine 307 to cysteine 312. Asparagine 316 carries an N-linked (GlcNAc...) asparagine; by host glycan. Catalysis depends on charge relay system residues aspartate 326 and histidine 329. The cysteines at positions 347 and 371 are disulfide-linked. A glycan (N-linked (GlcNAc...) asparagine; by host) is linked at asparagine 358. The helical transmembrane segment at 393 to 413 (ILLGILLGVAVIIIVVLLLYF) threads the bilayer. The Intravirion segment spans residues 414 to 424 (MVDNGTRLHDA). N-linked (GlcNAc...) asparagine; by host glycosylation is present at asparagine 417.

The protein belongs to the influenza type C/coronaviruses hemagglutinin-esterase family. In terms of assembly, homodimer; disulfide-linked. Forms a complex with the M protein in the pre-Golgi. Associates then with S-M complex to form a ternary complex S-M-HE. Post-translationally, N-glycosylated in the host RER.

It is found in the virion membrane. It localises to the host cell membrane. The enzyme catalyses N-acetyl-9-O-acetylneuraminate + H2O = N-acetylneuraminate + acetate + H(+). It catalyses the reaction N-acetyl-4-O-acetylneuraminate + H2O = N-acetylneuraminate + acetate + H(+). In terms of biological role, structural protein that makes short spikes at the surface of the virus. Contains receptor binding and receptor-destroying activities. Mediates de-O-acetylation of N-acetyl-4-O-acetylneuraminic acid, which is probably the receptor determinant recognized by the virus on the surface of erythrocytes and susceptible cells. This receptor-destroying activity is important for virus release as it probably helps preventing self-aggregation and ensures the efficient spread of the progeny virus from cell to cell. May serve as a secondary viral attachment protein for initiating infection, the spike protein being the major one. May become a target for both the humoral and the cellular branches of the immune system. This chain is Hemagglutinin-esterase, found in Bovine coronavirus (strain 98TXSF-110-LUN) (BCoV-LUN).